A 530-amino-acid chain; its full sequence is MHQRILILDYGSQVTQLIARRVREAGVYSEIHAGDVDDAFVRDQVAQGLKGIILSGSHASAYEEGSMRVPAAVFEVGVPVLGICYGMQSMAQQLGGTVSFSDHREFGYAEVRAHGHTKLLDGLADFTTDEGHGMLKVWMSHGDKVTELPPGFKLMASTASCPIAGMADEDRGFYAVQFHPEVTHTVQGKAMLARFVKDICGCEGDWNMPDYISEAVARIREQVGSDEVILGLSGGVDSLVAAALIHRAIGDQLTCVFVDHGLLRLDEGKQVMQTFAENMGVKIVHVDATSQFMGKLTGVADPEAKRKIIGREFVEVFQDEAGKLQGAKWLAQGTIYPDVIESAGAKTGKATSIKSHHNVGGLPDTLNLQLLEPLRELFKDEVRELGVALGLPPQMVYRHPFPGPGLGVRILGEVKHEYAELLRRADAIFIEELRNAKDPASGLTWYELTSQAFAVFLPVKSVGVMGDGRTYEYVVALRAVQTFDFMTADWAPLPHPLLARVSSRIINEVRGINRVVYDVSSKPPATIEWE.

The 202-residue stretch at 4–205 (RILILDYGSQ…VKDICGCEGD (202 aa)) folds into the Glutamine amidotransferase type-1 domain. The Nucleophile role is filled by C84. Residues H179 and E181 contribute to the active site. Residues 206 to 398 (WNMPDYISEA…LGLPPQMVYR (193 aa)) form the GMPS ATP-PPase domain. Residue 233-239 (SGGVDSL) coordinates ATP.

In terms of assembly, homodimer.

The enzyme catalyses XMP + L-glutamine + ATP + H2O = GMP + L-glutamate + AMP + diphosphate + 2 H(+). It functions in the pathway purine metabolism; GMP biosynthesis; GMP from XMP (L-Gln route): step 1/1. Functionally, catalyzes the synthesis of GMP from XMP. The protein is GMP synthase [glutamine-hydrolyzing] of Bordetella parapertussis (strain 12822 / ATCC BAA-587 / NCTC 13253).